Here is a 275-residue protein sequence, read N- to C-terminus: Diaminopimelate epimerase (275 aa).

Substrate is bound by residues asparagine 20 and asparagine 63. The active-site Proton donor is the cysteine 72. Substrate-binding positions include 73 to 74 (GN), asparagine 179, and 197 to 198 (ER). Cysteine 207 acts as the Proton acceptor in catalysis. 208–209 (GT) is a binding site for substrate.

Belongs to the diaminopimelate epimerase family. Homodimer.

The protein resides in the cytoplasm. It catalyses the reaction (2S,6S)-2,6-diaminopimelate = meso-2,6-diaminopimelate. The protein operates within amino-acid biosynthesis; L-lysine biosynthesis via DAP pathway; DL-2,6-diaminopimelate from LL-2,6-diaminopimelate: step 1/1. In terms of biological role, catalyzes the stereoinversion of LL-2,6-diaminopimelate (L,L-DAP) to meso-diaminopimelate (meso-DAP), a precursor of L-lysine and an essential component of the bacterial peptidoglycan. This chain is Diaminopimelate epimerase, found in Chlamydia trachomatis serovar A (strain ATCC VR-571B / DSM 19440 / HAR-13).